The chain runs to 273 residues: Imidazole glycerol phosphate synthase subunit HisF (273 aa).

Active-site residues include D11 and D134.

Belongs to the HisA/HisF family. In terms of assembly, heterodimer of HisH and HisF.

It is found in the cytoplasm. The catalysed reaction is 5-[(5-phospho-1-deoxy-D-ribulos-1-ylimino)methylamino]-1-(5-phospho-beta-D-ribosyl)imidazole-4-carboxamide + L-glutamine = D-erythro-1-(imidazol-4-yl)glycerol 3-phosphate + 5-amino-1-(5-phospho-beta-D-ribosyl)imidazole-4-carboxamide + L-glutamate + H(+). Its pathway is amino-acid biosynthesis; L-histidine biosynthesis; L-histidine from 5-phospho-alpha-D-ribose 1-diphosphate: step 5/9. In terms of biological role, IGPS catalyzes the conversion of PRFAR and glutamine to IGP, AICAR and glutamate. The HisF subunit catalyzes the cyclization activity that produces IGP and AICAR from PRFAR using the ammonia provided by the HisH subunit. This is Imidazole glycerol phosphate synthase subunit HisF from Methanosarcina mazei (strain ATCC BAA-159 / DSM 3647 / Goe1 / Go1 / JCM 11833 / OCM 88) (Methanosarcina frisia).